Consider the following 390-residue polypeptide: MLNFDLLTTEGHARRGRLTLNHGVVETPIFMPVGTYGTVKGVMPRDLETMGAQIILGNTFHLWMRPGQDVMAQFGGLHRFENWTRPILTDSGGFQVWSLGEMRKISEEGVRFASPVNGDKLFLTPEVSMQIQTVLNSDIVMQFDECTPYWQGAKNVGHITTEKEARVSMELSLRWAARSKAEFARLGNPNALFGIVQGGMFESLREESLNALVELDFPGYAVGGVSVGEPKDEMLRIMNHTPHLLPADKPRYLMGVGTPEDLVDGVACGVDMFDCVMPTRNARNGHLFTRYGDLKIRNARHKADERPLDETCSCQACKGSTLPDGRVTGGFSRAYLHHLDRCGEMLGPMLASIHNLHYYLNLMREVREALDAGRFEAFRAQFKADRARGV.

The Proton acceptor role is filled by aspartate 90. Residues 90–94 (DSGGF), aspartate 144, glutamine 197, and glycine 224 contribute to the substrate site. The RNA binding stretch occupies residues 255-261 (GVGTPED). Aspartate 274 functions as the Nucleophile in the catalytic mechanism. An RNA binding; important for wobble base 34 recognition region spans residues 279-283 (TRNAR). 4 residues coordinate Zn(2+): cysteine 312, cysteine 314, cysteine 317, and histidine 354.

It belongs to the queuine tRNA-ribosyltransferase family. As to quaternary structure, homodimer. Within each dimer, one monomer is responsible for RNA recognition and catalysis, while the other monomer binds to the replacement base PreQ1. The cofactor is Zn(2+).

It carries out the reaction 7-aminomethyl-7-carbaguanine + guanosine(34) in tRNA = 7-aminomethyl-7-carbaguanosine(34) in tRNA + guanine. It functions in the pathway tRNA modification; tRNA-queuosine biosynthesis. Functionally, catalyzes the base-exchange of a guanine (G) residue with the queuine precursor 7-aminomethyl-7-deazaguanine (PreQ1) at position 34 (anticodon wobble position) in tRNAs with GU(N) anticodons (tRNA-Asp, -Asn, -His and -Tyr). Catalysis occurs through a double-displacement mechanism. The nucleophile active site attacks the C1' of nucleotide 34 to detach the guanine base from the RNA, forming a covalent enzyme-RNA intermediate. The proton acceptor active site deprotonates the incoming PreQ1, allowing a nucleophilic attack on the C1' of the ribose to form the product. After dissociation, two additional enzymatic reactions on the tRNA convert PreQ1 to queuine (Q), resulting in the hypermodified nucleoside queuosine (7-(((4,5-cis-dihydroxy-2-cyclopenten-1-yl)amino)methyl)-7-deazaguanosine). This Leptothrix cholodnii (strain ATCC 51168 / LMG 8142 / SP-6) (Leptothrix discophora (strain SP-6)) protein is Queuine tRNA-ribosyltransferase.